Consider the following 134-residue polypeptide: UPF0412 protein YaaI (134 aa).

The first 23 residues, 1–23 (MKSVFTLSASLAISLMLCCTAQA), serve as a signal peptide directing secretion.

It belongs to the UPF0412 family.

The protein is UPF0412 protein YaaI of Escherichia coli O17:K52:H18 (strain UMN026 / ExPEC).